The primary structure comprises 184 residues: Ras-related protein O-Krev (184 aa).

10–17 is a binding site for GTP; the sequence is GSGGVGKS. An Effector region motif is present at residues 32-40; it reads YDPTIEDSY. Residues 57-61 and 116-119 contribute to the GTP site; these read DTAGT and NKCD. Cys-181 is subject to Cysteine methyl ester. Cys-181 carries S-geranylgeranyl cysteine lipidation. A propeptide spans 182–184 (removed in mature form); sequence TLL.

It belongs to the small GTPase superfamily. Ras family.

The protein resides in the cell membrane. It carries out the reaction GTP + H2O = GDP + phosphate + H(+). The protein is Ras-related protein O-Krev of Diplobatis ommata (Ocellated electric ray).